The primary structure comprises 422 residues: L-2-hydroxyglutarate dehydrogenase (422 aa).

Belongs to the L2HGDH family. It depends on FAD as a cofactor.

The protein localises to the cell inner membrane. The enzyme catalyses (S)-2-hydroxyglutarate + a quinone = a quinol + 2-oxoglutarate. The protein operates within amino-acid degradation. Its function is as follows. Catalyzes the dehydrogenation of L-2-hydroxyglutarate (L2HG) to alpha-ketoglutarate and couples to the respiratory chain by feeding electrons from the reaction into the membrane quinone pool. Functions in a L-lysine degradation pathway that proceeds via cadaverine, glutarate and L-2-hydroxyglutarate. Also displays some oxidase activity in vitro on L-2-hydroxyglutarate with O2 as the electron acceptor, but this activity is most likely not physiological. This Escherichia coli O17:K52:H18 (strain UMN026 / ExPEC) protein is L-2-hydroxyglutarate dehydrogenase.